We begin with the raw amino-acid sequence, 189 residues long: Protein GrpE (189 aa).

Over residues 1–38 (MTKSNETERMEESEETHSSDIRSASESDHASGSDHTES) the composition is skewed to basic and acidic residues. Residues 1–54 (MTKSNETERMEESEETHSSDIRSASESDHASGSDHTESADEIPTADAEQGELEQ) are disordered.

Belongs to the GrpE family. As to quaternary structure, homodimer.

The protein resides in the cytoplasm. Participates actively in the response to hyperosmotic and heat shock by preventing the aggregation of stress-denatured proteins, in association with DnaK and GrpE. It is the nucleotide exchange factor for DnaK and may function as a thermosensor. Unfolded proteins bind initially to DnaJ; upon interaction with the DnaJ-bound protein, DnaK hydrolyzes its bound ATP, resulting in the formation of a stable complex. GrpE releases ADP from DnaK; ATP binding to DnaK triggers the release of the substrate protein, thus completing the reaction cycle. Several rounds of ATP-dependent interactions between DnaJ, DnaK and GrpE are required for fully efficient folding. This chain is Protein GrpE, found in Tropheryma whipplei (strain Twist) (Whipple's bacillus).